Consider the following 195-residue polypeptide: Killer cell lectin-like receptor subfamily G member 1 (195 aa).

Topologically, residues 1-38 (MTDSVIYSMLELPTATQAQNDYGPQQKSSSSRPSCSCL) are cytoplasmic. Positions 5–10 (VIYSML) match the ITIM motif motif. The chain crosses the membrane as a helical; Signal-anchor for type II membrane protein span at residues 39–59 (VAIALGLLTAVLLSVLLYQWI). Residues 60-195 (LCQGSNYSTC…KCPFADQALF (136 aa)) lie on the Extracellular side of the membrane. A glycan (N-linked (GlcNAc...) asparagine) is linked at Asn65. Cys75 and Cys86 are joined by a disulfide. Residues 82 to 185 (YGNHCYYFSV…CEVPLHWVCK (104 aa)) form the C-type lectin domain. Residues Asn97, Asn137, and Asn150 are each glycosylated (N-linked (GlcNAc...) asparagine). 2 disulfides stabilise this stretch: Cys103–Cys184 and Cys163–Cys176.

Forms a monomer and homodimer; disulfide-linked. Interacts (via ITIM motif) with PTPN11 and INPP5D. As to expression, expressed specifically on natural killer (NK) cells and T-cells, mainly CD8 T-cells.

The protein resides in the cell membrane. In terms of biological role, plays an inhibitory role on natural killer (NK) cells and T-cell functions upon binding to their non-MHC ligands. May mediate missing self recognition by binding to a highly conserved site on classical cadherins, enabling it to monitor expression of E-cadherin/CDH1, N-cadherin/CDH2 and R-cadherin/CDH4 on target cells. This Homo sapiens (Human) protein is Killer cell lectin-like receptor subfamily G member 1 (KLRG1).